The chain runs to 140 residues: Ubiquitin-like protein ATG12 (140 aa).

The segment at 1–50 (MAEEPQSVLQLPTSIAAGGEGLTDVSPETTTPEPPSSAAVSPGTEEPAGD) is disordered. Positions 25–42 (VSPETTTPEPPSSAAVSP) are enriched in low complexity. G140 participates in a covalent cross-link: Glycyl lysine isopeptide (Gly-Lys) (interchain with K-130 in ATG5).

This sequence belongs to the ATG12 family. In terms of assembly, forms a conjugate with ATG5. Part of the minor complex composed of 4 sets of ATG12-ATG5 and ATG16L1 (400 kDa); this complex interacts with ATG3 leading to disruption of ATG7 interaction and promotion of ATG8-like proteins lipidation. Forms an 800-kDa complex composed of ATG12-ATG5 and ATG16L2. Interacts with DHX58/RIG-1, IFIH1/MDA5 and MAVS/IPS-1 in monomeric form as well as in ATG12-ATG5 conjugate. The interaction with MAVS is further enhanced upon vesicular stomatitis virus (VSV) infection. Interacts with ATG3; this interaction is essential for phosphatidylethanolamine (PE)-conjugated ATG8-like proteins formation. Interacts with ATG7. Interacts with ATG10. The ATG12-ATG5 conjugate interacts with RAB33A; this interaction is bridged by ATG16L1 and promotes ATG12-ATG5-ATG16L1 complex recruitment to phagophores. Interacts with TECPR1. Interacts with SH3BGRL. The ATG12-ATG5 conjugate interacts with PDCD6IP (via the BRO1 domain); this interaction is bridged by ATG12 and promotes multiple PDCD6IP-mediated functions such as endolysosomal trafficking, macroautophagy and exosome biogenesis. Post-translationally, acetylated by EP300. As to expression, ubiquitous.

It localises to the cytoplasm. The protein resides in the preautophagosomal structure membrane. Ubiquitin-like protein involved in autophagy vesicles formation. Conjugation with ATG5 through a ubiquitin-like conjugating system involving also ATG7 as an E1-like activating enzyme and ATG10 as an E2-like conjugating enzyme, is essential for its function. The ATG12-ATG5 conjugate acts as an E3-like enzyme which is required for lipidation of ATG8 family proteins and their association to the vesicle membranes. As part of the ATG8 conjugation system with ATG5 and ATG16L1, required for recruitment of LRRK2 to stressed lysosomes and induction of LRRK2 kinase activity in response to lysosomal stress. In terms of biological role, (Microbial infection) May act as a proviral factor. In association with ATG5, negatively regulates the innate antiviral immune response by impairing the type I IFN production pathway upon vesicular stomatitis virus (VSV) infection. Required for the translation of incoming hepatitis C virus (HCV) RNA and, thereby, for the initiation of HCV replication, but not required once infection is established. In Homo sapiens (Human), this protein is Ubiquitin-like protein ATG12.